A 31-amino-acid polypeptide reads, in one-letter code: Cytochrome b6-f complex subunit 6 (31 aa).

The chain crosses the membrane as a helical span at residues 4-24 (ITSYFGFLLAALTITSALFIG).

It belongs to the PetL family. In terms of assembly, the 4 large subunits of the cytochrome b6-f complex are cytochrome b6, subunit IV (17 kDa polypeptide, PetD), cytochrome f and the Rieske protein, while the 4 small subunits are PetG, PetL, PetM and PetN. The complex functions as a dimer.

It is found in the plastid. The protein resides in the chloroplast thylakoid membrane. Its function is as follows. Component of the cytochrome b6-f complex, which mediates electron transfer between photosystem II (PSII) and photosystem I (PSI), cyclic electron flow around PSI, and state transitions. PetL is important for photoautotrophic growth as well as for electron transfer efficiency and stability of the cytochrome b6-f complex. The chain is Cytochrome b6-f complex subunit 6 from Humulus lupulus (European hop).